A 67-amino-acid polypeptide reads, in one-letter code: Mu-conotoxin TsIIIA (67 aa).

Residues methionine 1 to alanine 20 form the signal peptide. Positions valine 21 to arginine 48 are excised as a propeptide. Cystine bridges form between cysteine 50-cysteine 59, cysteine 51-cysteine 64, and cysteine 55-cysteine 65.

This sequence belongs to the conotoxin M superfamily. Expressed by the venom duct.

The protein localises to the secreted. In terms of biological role, mu-conotoxins block voltage-gated sodium channels (Nav). This toxin specifically inhibits mammalian Nav1.8/SCN10A sodium currents (IC(50)=2.11 uM) without inducing a shift in the current-voltage relationship of this channel. In vivo, shows potent analgesic activity in a mice hotplate analgesic assay. In addition, this toxin has better analgesic effects than Ziconotide, an analgesic drug. This Conus tessulatus (Tessellate cone) protein is Mu-conotoxin TsIIIA.